A 396-amino-acid chain; its full sequence is uncharacterized protein (396 aa).

11 helical membrane-spanning segments follow: residues 7 to 27 (SDDV…SIGL), 36 to 56 (AVSG…VGVL), 62 to 82 (VYDT…LFQI), 94 to 114 (LLFI…LAFF), 159 to 179 (VVAD…IPAL), 218 to 238 (IAFN…VSGY), 250 to 270 (GTLG…IFLF), 285 to 305 (TFLI…RLIV), 310 to 330 (LILL…LAAG), 340 to 360 (ILLA…MAIA), and 367 to 387 (VAPI…VGTF).

Its subcellular location is the cell membrane. This is an uncharacterized protein from Bacillus subtilis (strain 168).